A 220-amino-acid chain; its full sequence is UPF0319 protein YccT (220 aa).

The N-terminal stretch at Met-1 to Ala-20 is a signal peptide.

This sequence belongs to the UPF0319 family.

This is UPF0319 protein YccT from Salmonella agona (strain SL483).